The sequence spans 161 residues: MASSRVVLILSISMVLLSSVAIATDHIVGDDKGWTVDFDYTQWAQDKVFRVGDNLVFNYDPARHNVFKVNGTLFQSCTFPPKNEALSTGKDIIQLKTEGRKWYVCGVADHCSARQMKLVITVLAEGAPAPSPPPSSDAHSVVSSLFGVVMAIMVAIAVIFA.

Residues 1–23 form the signal peptide; it reads MASSRVVLILSISMVLLSSVAIA. A Phytocyanin domain is found at 24–124; it reads TDHIVGDDKG…QMKLVITVLA (101 aa). H64 contributes to the Cu cation binding site. N-linked (GlcNAc...) asparagine glycosylation is present at N70. C77 and C111 are joined by a disulfide. Cu cation is bound by residues C105, H110, and M116. The chain crosses the membrane as a helical span at residues 141–161; that stretch reads VVSSLFGVVMAIMVAIAVIFA.

The protein resides in the membrane. This Medicago truncatula (Barrel medic) protein is Blue copper protein 1a.